A 323-amino-acid polypeptide reads, in one-letter code: Beta-ketoacyl-[acyl-carrier-protein] synthase III (323 aa).

Residues C114 and H250 contribute to the active site. The ACP-binding stretch occupies residues 251–255 (QANIR). The active site involves N280.

Belongs to the thiolase-like superfamily. FabH family. As to quaternary structure, homodimer.

Its subcellular location is the cytoplasm. It carries out the reaction malonyl-[ACP] + acetyl-CoA + H(+) = 3-oxobutanoyl-[ACP] + CO2 + CoA. The protein operates within lipid metabolism; fatty acid biosynthesis. Catalyzes the condensation reaction of fatty acid synthesis by the addition to an acyl acceptor of two carbons from malonyl-ACP. Catalyzes the first condensation reaction which initiates fatty acid synthesis and may therefore play a role in governing the total rate of fatty acid production. Possesses both acetoacetyl-ACP synthase and acetyl transacylase activities. Its substrate specificity determines the biosynthesis of branched-chain and/or straight-chain of fatty acids. This is Beta-ketoacyl-[acyl-carrier-protein] synthase III from Roseobacter denitrificans (strain ATCC 33942 / OCh 114) (Erythrobacter sp. (strain OCh 114)).